The primary structure comprises 129 residues: Fluoride-specific ion channel FluC (129 aa).

Helical transmembrane passes span 1–21, 35–55, 71–91, and 105–125; these read MLMK…LGSA, GGLP…IGFI, LFLV…IFEN, and AYLA…TFFA. Residues G79 and T82 each coordinate Na(+).

It belongs to the fluoride channel Fluc/FEX (TC 1.A.43) family.

It is found in the cell inner membrane. It catalyses the reaction fluoride(in) = fluoride(out). Its activity is regulated as follows. Na(+) is not transported, but it plays an essential structural role and its presence is essential for fluoride channel function. Functionally, fluoride-specific ion channel. Important for reducing fluoride concentration in the cell, thus reducing its toxicity. The polypeptide is Fluoride-specific ion channel FluC (Chlorobium phaeobacteroides (strain DSM 266 / SMG 266 / 2430)).